The primary structure comprises 359 residues: SAGA complex subunit Spt7 (359 aa).

Component of the Spt-Ada-Gcn5 acetyltransferase (SAGA) complex consisting of wda/Taf5L, Saf6, Taf9, Taf10b, Taf12, Ada1, Spt3, Spt7, Spt20, Sf3b3, Sf3b5, Nipped-A/Tra1, a histone acetyltransferase (HAT) module made up of Gcn5, Ada2b (Isoform B), Ada3 and Sgf29, and a deubiquitinase (DUB) module made up of not/nonstop, Sgf11 and e(y)2 tethered to SAGA by Atxn7. Interacts with Ada2b; the interaction is direct.

It localises to the nucleus. Functionally, component of the transcription regulatory complex SAGA, a multiprotein complex that activates transcription by remodeling chromatin and mediating histone acetylation and deubiquitination. The SAGA complex predominantly acetylates histone H3. The protein is SAGA complex subunit Spt7 of Drosophila melanogaster (Fruit fly).